Here is a 1031-residue protein sequence, read N- to C-terminus: Formin-binding protein 4 (1031 aa).

Disordered stretches follow at residues 1–102 (MMGK…TTRP), 116–143 (AYADSDDDESDVSEKTAQSKEANGNQAT), and 166–205 (APVVASAPPPTPPRPEPKEAATPALSPTASNGSDTAQTPG). At S19 the chain carries Phosphoserine. Low complexity-rich tracts occupy residues 41 to 73 (DSTAAATSQSAPAAATAAAATSPAVPASAAPED) and 83 to 92 (VVEVPNVVQN). 3 positions are modified to phosphoserine: S120, S125, and S128. The segment covering 134–143 (SKEANGNQAT) has biased composition (polar residues). T176 carries the phosphothreonine modification. The segment covering 190–203 (LSPTASNGSDTAQT) has biased composition (polar residues). The region spanning 218 to 252 (EIEMGDWQEVWDENTGCYYYWNTQTNEVTWELPQY) is the WW 1 domain. Residue K294 is modified to N6-acetyllysine. Residue K305 forms a Glycyl lysine isopeptide (Lys-Gly) (interchain with G-Cter in SUMO1) linkage. A Glycyl lysine isopeptide (Lys-Gly) (interchain with G-Cter in SUMO2) cross-link involves residue K339. Residue K352 forms a Glycyl lysine isopeptide (Lys-Gly) (interchain with G-Cter in SUMO1); alternate linkage. Residue K352 forms a Glycyl lysine isopeptide (Lys-Gly) (interchain with G-Cter in SUMO2); alternate linkage. The disordered stretch occupies residues 355-518 (DPVSETKETS…KETEVEESSE (164 aa)). Acidic residues predominate over residues 400–414 (ESEEEEEEEEQDTLE). A compositionally biased stretch (basic and acidic residues) spans 418–430 (ALERKKAELRALE). Residues S435, S440, S443, S446, and S450 each carry the phosphoserine modification. Over residues 436-450 (VSGSSPRSDISQPAS) the composition is skewed to polar residues. Basic residues predominate over residues 457-466 (IMSKRGKWKM). Residues 469–482 (RATSPESTSRSSSK) show a composition bias toward low complexity. A phosphoserine mark is found at S472, S507, and S516. The segment covering 499–518 (DSEKIDEISDKETEVEESSE) has biased composition (basic and acidic residues). A Glycyl lysine isopeptide (Lys-Gly) (interchain with G-Cter in SUMO1); alternate cross-link involves residue K527. K527 participates in a covalent cross-link: Glycyl lysine isopeptide (Lys-Gly) (interchain with G-Cter in SUMO2); alternate. The WW 2 domain occupies 603–637 (NATPKGWSCHWDRDHRRYFYVNEQSGESQWEFPDG). Disordered stretches follow at residues 629–681 (ESQW…SLCK), 712–813 (PLPL…VQRS), and 900–994 (PAQA…RIEE). The span at 643–663 (SQTKEVRDESLPKLTVKDKTC) shows a compositional bias: basic and acidic residues. The span at 664 to 677 (TDPNSTESSENPTG) shows a compositional bias: polar residues. Positions 712–741 (PLPLEMPPPPPPPPESPPPPPPPPPPPPPL) are enriched in pro residues. Positions 742 to 757 (EDGEIQEVEMEDEGSE) are enriched in acidic residues. Positions 771 to 794 (KPSTQTTAVTSQSLVDSTASSPPS) are enriched in polar residues. A compositionally biased stretch (pro residues) spans 913 to 939 (VEPPPPPPPPPTPTPPPPPPAPKVPPP). Positions 943 to 955 (RKGKKDKAKKSKT) are enriched in basic residues. Residues 971-984 (LDEEDNSSSSEEDR) show a composition bias toward acidic residues. Phosphoserine is present on residues S977, S978, and S979. A compositionally biased stretch (basic and acidic residues) spans 985-994 (ESTAQKRIEE).

As to quaternary structure, binds FMN1. Interacts with the Arg/Gly-rich-flanked Pro-rich regions of KHDRBS1/SAM68. Arginine methylation in these regions has no effect on this binding. In terms of tissue distribution, ubiquitous. Highest levels in spleen and thymus.

The sequence is that of Formin-binding protein 4 (Fnbp4) from Mus musculus (Mouse).